The primary structure comprises 68 residues: Tetrahydromethanopterin S-methyltransferase subunit F (68 aa).

The helical transmembrane segment at 45–65 (IAIGFLLAVLLVGVPAMMSIL) threads the bilayer.

It belongs to the MtrF family. As to quaternary structure, the complex is composed of 8 subunits; MtrA, MtrB, MtrC, MtrD, MtrE, MtrF, MtrG and MtrH.

It localises to the cell membrane. The catalysed reaction is 5-methyl-5,6,7,8-tetrahydromethanopterin + coenzyme M + 2 Na(+)(in) = 5,6,7,8-tetrahydromethanopterin + methyl-coenzyme M + 2 Na(+)(out). It participates in one-carbon metabolism; methanogenesis from CO(2); methyl-coenzyme M from 5,10-methylene-5,6,7,8-tetrahydromethanopterin: step 2/2. Its function is as follows. Part of a complex that catalyzes the formation of methyl-coenzyme M and tetrahydromethanopterin from coenzyme M and methyl-tetrahydromethanopterin. This is an energy-conserving, sodium-ion translocating step. This chain is Tetrahydromethanopterin S-methyltransferase subunit F (mtrF), found in Methanothermobacter marburgensis (strain ATCC BAA-927 / DSM 2133 / JCM 14651 / NBRC 100331 / OCM 82 / Marburg) (Methanobacterium thermoautotrophicum).